A 104-amino-acid polypeptide reads, in one-letter code: Precursor of CEP11 (104 aa).

The signal sequence occupies residues 1 to 27; the sequence is MAKTRRVIYLFLTIVLLFCELIDEAQG. Residues 28-85 constitute a propeptide that is removed on maturation; it reads SRFRCHHSEDYSCKKRSSHHHHHHHHHQQQQHHHKDTPPEELQGSIKTRRSKDIYGLN. A disordered region spans residues 37 to 104; sequence DYSCKKRSSH…SPGVGHLIKT (68 aa). The segment covering 41–62 has biased composition (basic residues); sequence KKRSSHHHHHHHHHQQQQHHHK. A hydroxyproline mark is found at P92 and P96. Positions 101 to 104 are excised as a propeptide; the sequence is LIKT.

This sequence belongs to the C-terminally encoded plant signaling peptide (CEP) family. As to quaternary structure, interacts with CEP receptors (e.g. CEPR1 and CEPR2). In terms of processing, the mature small signaling peptide is generated by proteolytic processing of the longer precursor. Expressed in lateral root primordia and in lateral roots excluding the meristem region.

It is found in the secreted. Its subcellular location is the extracellular space. It localises to the apoplast. Its function is as follows. Extracellular signaling peptide that may regulate primary root growth rate and systemic nitrogen (N)-demand signaling. Mediates up-regulation of genes involved in N uptake and assimilation pathways. The chain is Precursor of CEP11 from Arabidopsis thaliana (Mouse-ear cress).